We begin with the raw amino-acid sequence, 188 residues long: Elongation factor P (188 aa).

An N6-(3,6-diaminohexanoyl)-5-hydroxylysine modification is found at Lys-34.

This sequence belongs to the elongation factor P family. In terms of processing, may be beta-lysylated on the epsilon-amino group of Lys-34 by the combined action of EpmA and EpmB, and then hydroxylated on the C5 position of the same residue by EpmC (if this protein is present). Lysylation is critical for the stimulatory effect of EF-P on peptide-bond formation. The lysylation moiety may extend toward the peptidyltransferase center and stabilize the terminal 3-CCA end of the tRNA. Hydroxylation of the C5 position on Lys-34 may allow additional potential stabilizing hydrogen-bond interactions with the P-tRNA.

Its subcellular location is the cytoplasm. The protein operates within protein biosynthesis; polypeptide chain elongation. Involved in peptide bond synthesis. Alleviates ribosome stalling that occurs when 3 or more consecutive Pro residues or the sequence PPG is present in a protein, possibly by augmenting the peptidyl transferase activity of the ribosome. Modification of Lys-34 is required for alleviation. The sequence is that of Elongation factor P from Pasteurella multocida (strain Pm70).